Reading from the N-terminus, the 81-residue chain is Photosystem I iron-sulfur center (81 aa).

2 4Fe-4S ferredoxin-type domains span residues 2–31 and 39–68; these read SHSV…MVPW and IAAS…IRVY. Cys11, Cys14, Cys17, Cys21, Cys48, Cys51, Cys54, and Cys58 together coordinate [4Fe-4S] cluster.

The cyanobacterial PSI reaction center is composed of one copy each of PsaA,B,C,D,E,F,I,J,K,L,M and X, and forms trimeric complexes. [4Fe-4S] cluster serves as cofactor.

Its subcellular location is the cellular thylakoid membrane. It carries out the reaction reduced [plastocyanin] + hnu + oxidized [2Fe-2S]-[ferredoxin] = oxidized [plastocyanin] + reduced [2Fe-2S]-[ferredoxin]. Apoprotein for the two 4Fe-4S centers FA and FB of photosystem I (PSI); essential for photochemical activity. FB is the terminal electron acceptor of PSI, donating electrons to ferredoxin. The C-terminus interacts with PsaA/B/D and helps assemble the protein into the PSI complex. Required for binding of PsaD and PsaE to PSI. PSI is a plastocyanin/cytochrome c6-ferredoxin oxidoreductase, converting photonic excitation into a charge separation, which transfers an electron from the donor P700 chlorophyll pair to the spectroscopically characterized acceptors A0, A1, FX, FA and FB in turn. This is Photosystem I iron-sulfur center from Synechococcus elongatus (strain ATCC 33912 / PCC 7942 / FACHB-805) (Anacystis nidulans R2).